A 93-amino-acid polypeptide reads, in one-letter code: DNA/RNA-binding protein Alba (93 aa).

At Lys-11 the chain carries N6-acetyllysine.

It belongs to the histone-like Alba family. In terms of processing, acetylated. Acetylation at Lys-11 decreases DNA-binding affinity.

The protein localises to the cytoplasm. It localises to the chromosome. Binds double-stranded DNA tightly but without sequence specificity. Involved in DNA compaction. The chain is DNA/RNA-binding protein Alba from Pyrococcus abyssi (strain GE5 / Orsay).